We begin with the raw amino-acid sequence, 244 residues long: DNA repair protein RecO (244 aa).

The protein belongs to the RecO family.

In terms of biological role, involved in DNA repair and RecF pathway recombination. The protein is DNA repair protein RecO of Polynucleobacter necessarius subsp. necessarius (strain STIR1).